A 207-amino-acid polypeptide reads, in one-letter code: 8-oxoguanine DNA glycosylase/AP lyase (207 aa).

Catalysis depends on residues Lys128 and Asp146.

Belongs to the type-2 OGG1 family.

The enzyme catalyses 2'-deoxyribonucleotide-(2'-deoxyribose 5'-phosphate)-2'-deoxyribonucleotide-DNA = a 3'-end 2'-deoxyribonucleotide-(2,3-dehydro-2,3-deoxyribose 5'-phosphate)-DNA + a 5'-end 5'-phospho-2'-deoxyribonucleoside-DNA + H(+). Functionally, catalyzes the excision of an oxidatively damaged form of guanine (7,8-dihydro-8-oxoguanine = 8-oxoG) from DNA. Also cleaves the DNA backbone at apurinic/apyrimidinic sites (AP sites). This Saccharolobus islandicus (strain Y.N.15.51 / Yellowstone #2) (Sulfolobus islandicus) protein is 8-oxoguanine DNA glycosylase/AP lyase.